Here is a 203-residue protein sequence, read N- to C-terminus: LexA repressor (203 aa).

The H-T-H motif DNA-binding region spans 28–48 (VRELCDELGFKSPNTAHFHLK). Catalysis depends on for autocatalytic cleavage activity residues Ser122 and Lys159.

Belongs to the peptidase S24 family. Homodimer.

The catalysed reaction is Hydrolysis of Ala-|-Gly bond in repressor LexA.. Functionally, represses a number of genes involved in the response to DNA damage (SOS response), including recA and lexA. In the presence of single-stranded DNA, RecA interacts with LexA causing an autocatalytic cleavage which disrupts the DNA-binding part of LexA, leading to derepression of the SOS regulon and eventually DNA repair. In Desulfatibacillum aliphaticivorans, this protein is LexA repressor.